Consider the following 503-residue polypeptide: Glutamate--tRNA ligase (503 aa).

The 'HIGH' region motif lies at 12–22; the sequence is PSPTGYLHVGG. The 'KMSKS' region motif lies at 259-263; the sequence is KLSKR. K262 serves as a coordination point for ATP.

The protein belongs to the class-I aminoacyl-tRNA synthetase family. Glutamate--tRNA ligase type 1 subfamily. As to quaternary structure, monomer.

The protein localises to the cytoplasm. It carries out the reaction tRNA(Glu) + L-glutamate + ATP = L-glutamyl-tRNA(Glu) + AMP + diphosphate. In terms of biological role, catalyzes the attachment of glutamate to tRNA(Glu) in a two-step reaction: glutamate is first activated by ATP to form Glu-AMP and then transferred to the acceptor end of tRNA(Glu). This Chloroherpeton thalassium (strain ATCC 35110 / GB-78) protein is Glutamate--tRNA ligase.